We begin with the raw amino-acid sequence, 270 residues long: Putative [LysW]-aminoadipate/[LysW]-glutamate kinase (270 aa).

Substrate contacts are provided by residues 42 to 43 (GG), Arg-69, and Asn-177.

Belongs to the acetylglutamate kinase family. LysZ subfamily.

The protein resides in the cytoplasm. The enzyme catalyses [amino-group carrier protein]-C-terminal-N-(1,4-dicarboxybutan-1-yl)-L-glutamine + ATP = [amino-group carrier protein]-C-terminal-N-(1-carboxy-5-phosphooxy-5-oxopentan-1-yl)-L-glutamine + ADP. It carries out the reaction [amino-group carrier protein]-C-terminal-gamma-(L-glutamyl)-L-glutamate + ATP = [amino-group carrier protein]-C-terminal-gamma-(5-phospho-L-glutamyl)-L-glutamate + ADP. It functions in the pathway amino-acid biosynthesis; L-lysine biosynthesis via AAA pathway; L-lysine from L-alpha-aminoadipate (Thermus route): step 2/5. It participates in amino-acid biosynthesis; L-arginine biosynthesis. Its function is as follows. Involved in both the arginine and lysine biosynthetic pathways. Phosphorylates the LysW-bound precursors glutamate (for arginine biosynthesis), respectively alpha-aminoadipate (for lysine biosynthesis). This chain is Putative [LysW]-aminoadipate/[LysW]-glutamate kinase, found in Aeropyrum pernix (strain ATCC 700893 / DSM 11879 / JCM 9820 / NBRC 100138 / K1).